Reading from the N-terminus, the 599-residue chain is Aspartate--tRNA(Asp/Asn) ligase (599 aa).

Glutamate 174 is an L-aspartate binding site. Residues 198-201 (QLFK) form an aspartate region. Residue arginine 220 coordinates L-aspartate. ATP is bound by residues 220–222 (RDE) and glutamine 229. Histidine 457 lines the L-aspartate pocket. Glutamate 491 contacts ATP. Arginine 498 provides a ligand contact to L-aspartate. 543 to 546 (GLDR) serves as a coordination point for ATP.

The protein belongs to the class-II aminoacyl-tRNA synthetase family. Type 1 subfamily. As to quaternary structure, homodimer.

The protein localises to the cytoplasm. The enzyme catalyses tRNA(Asx) + L-aspartate + ATP = L-aspartyl-tRNA(Asx) + AMP + diphosphate. Aspartyl-tRNA synthetase with relaxed tRNA specificity since it is able to aspartylate not only its cognate tRNA(Asp) but also tRNA(Asn). Reaction proceeds in two steps: L-aspartate is first activated by ATP to form Asp-AMP and then transferred to the acceptor end of tRNA(Asp/Asn). The sequence is that of Aspartate--tRNA(Asp/Asn) ligase from Paraburkholderia xenovorans (strain LB400).